A 132-amino-acid chain; its full sequence is Small ribosomal subunit protein uS8 (132 aa).

This sequence belongs to the universal ribosomal protein uS8 family. Part of the 30S ribosomal subunit. Contacts proteins S5 and S12.

One of the primary rRNA binding proteins, it binds directly to 16S rRNA central domain where it helps coordinate assembly of the platform of the 30S subunit. This Levilactobacillus brevis (strain ATCC 367 / BCRC 12310 / CIP 105137 / JCM 1170 / LMG 11437 / NCIMB 947 / NCTC 947) (Lactobacillus brevis) protein is Small ribosomal subunit protein uS8.